The sequence spans 404 residues: Cytoplasmic tRNA 2-thiolation protein 2 (404 aa).

Belongs to the CTU2/NCS2 family.

It is found in the cytoplasm. It functions in the pathway tRNA modification; 5-methoxycarbonylmethyl-2-thiouridine-tRNA biosynthesis. Its function is as follows. Plays a central role in 2-thiolation of mcm(5)S(2)U at tRNA wobble positions of tRNA(Lys), tRNA(Glu) and tRNA(Gln). May act by forming a heterodimer with NCS6/CTU1 that ligates sulfur from thiocarboxylated URM1 onto the uridine of tRNAs at wobble position. The chain is Cytoplasmic tRNA 2-thiolation protein 2 from Drosophila mojavensis (Fruit fly).